The sequence spans 278 residues: Putative pyruvate, phosphate dikinase regulatory protein (278 aa).

156-163 (GVSRTSKT) is a binding site for ADP.

Belongs to the pyruvate, phosphate/water dikinase regulatory protein family. PDRP subfamily.

The catalysed reaction is N(tele)-phospho-L-histidyl/L-threonyl-[pyruvate, phosphate dikinase] + ADP = N(tele)-phospho-L-histidyl/O-phospho-L-threonyl-[pyruvate, phosphate dikinase] + AMP + H(+). It catalyses the reaction N(tele)-phospho-L-histidyl/O-phospho-L-threonyl-[pyruvate, phosphate dikinase] + phosphate + H(+) = N(tele)-phospho-L-histidyl/L-threonyl-[pyruvate, phosphate dikinase] + diphosphate. Functionally, bifunctional serine/threonine kinase and phosphorylase involved in the regulation of the pyruvate, phosphate dikinase (PPDK) by catalyzing its phosphorylation/dephosphorylation. This Lactobacillus acidophilus (strain ATCC 700396 / NCK56 / N2 / NCFM) protein is Putative pyruvate, phosphate dikinase regulatory protein.